The sequence spans 144 residues: Transcription antitermination protein NusB (144 aa).

It belongs to the NusB family.

In terms of biological role, involved in transcription antitermination. Required for transcription of ribosomal RNA (rRNA) genes. Binds specifically to the boxA antiterminator sequence of the ribosomal RNA (rrn) operons. The polypeptide is Transcription antitermination protein NusB (Carboxydothermus hydrogenoformans (strain ATCC BAA-161 / DSM 6008 / Z-2901)).